The primary structure comprises 219 residues: Protein-L-isoaspartate O-methyltransferase 1 (219 aa).

The active site involves S67.

The protein belongs to the methyltransferase superfamily. L-isoaspartyl/D-aspartyl protein methyltransferase family.

It is found in the cytoplasm. The enzyme catalyses [protein]-L-isoaspartate + S-adenosyl-L-methionine = [protein]-L-isoaspartate alpha-methyl ester + S-adenosyl-L-homocysteine. Catalyzes the methyl esterification of L-isoaspartyl residues in peptides and proteins that result from spontaneous decomposition of normal L-aspartyl and L-asparaginyl residues. It plays a role in the repair and/or degradation of damaged proteins. The chain is Protein-L-isoaspartate O-methyltransferase 1 from Geotalea uraniireducens (strain Rf4) (Geobacter uraniireducens).